A 384-amino-acid chain; its full sequence is S-adenosylmethionine synthase (384 aa).

His15 contacts ATP. Asp17 contributes to the Mg(2+) binding site. Glu43 is a binding site for K(+). 2 residues coordinate L-methionine: Glu56 and Gln99. The segment at 99–109 (QSSDINQGVDR) is flexible loop. ATP is bound by residues 164-166 (DAK), 230-231 (RF), Asp239, 245-246 (RK), Ala262, and Lys266. L-methionine is bound at residue Asp239. Lys270 is a binding site for L-methionine.

It belongs to the AdoMet synthase family. Homotetramer; dimer of dimers. Mg(2+) is required as a cofactor. It depends on K(+) as a cofactor.

Its subcellular location is the cytoplasm. The enzyme catalyses L-methionine + ATP + H2O = S-adenosyl-L-methionine + phosphate + diphosphate. It functions in the pathway amino-acid biosynthesis; S-adenosyl-L-methionine biosynthesis; S-adenosyl-L-methionine from L-methionine: step 1/1. In terms of biological role, catalyzes the formation of S-adenosylmethionine (AdoMet) from methionine and ATP. The overall synthetic reaction is composed of two sequential steps, AdoMet formation and the subsequent tripolyphosphate hydrolysis which occurs prior to release of AdoMet from the enzyme. The protein is S-adenosylmethionine synthase of Pasteurella multocida (strain Pm70).